The sequence spans 207 residues: dTTP/UTP pyrophosphatase (207 aa).

Catalysis depends on Asp-87, which acts as the Proton acceptor.

The protein belongs to the Maf family. YhdE subfamily. A divalent metal cation is required as a cofactor.

The protein localises to the cytoplasm. It carries out the reaction dTTP + H2O = dTMP + diphosphate + H(+). The catalysed reaction is UTP + H2O = UMP + diphosphate + H(+). Its function is as follows. Nucleoside triphosphate pyrophosphatase that hydrolyzes dTTP and UTP. May have a dual role in cell division arrest and in preventing the incorporation of modified nucleotides into cellular nucleic acids. In Ralstonia nicotianae (strain ATCC BAA-1114 / GMI1000) (Ralstonia solanacearum), this protein is dTTP/UTP pyrophosphatase.